The primary structure comprises 309 residues: Aspartate carbamoyltransferase catalytic subunit (309 aa).

The carbamoyl phosphate site is built by Arg58 and Thr59. Residue Lys86 coordinates L-aspartate. The carbamoyl phosphate site is built by Arg108, His136, and Gln139. 2 residues coordinate L-aspartate: Arg170 and Arg224. Carbamoyl phosphate is bound by residues Gly266 and Pro267.

It belongs to the aspartate/ornithine carbamoyltransferase superfamily. ATCase family. As to quaternary structure, heterododecamer (2C3:3R2) of six catalytic PyrB chains organized as two trimers (C3), and six regulatory PyrI chains organized as three dimers (R2).

The catalysed reaction is carbamoyl phosphate + L-aspartate = N-carbamoyl-L-aspartate + phosphate + H(+). Its pathway is pyrimidine metabolism; UMP biosynthesis via de novo pathway; (S)-dihydroorotate from bicarbonate: step 2/3. In terms of biological role, catalyzes the condensation of carbamoyl phosphate and aspartate to form carbamoyl aspartate and inorganic phosphate, the committed step in the de novo pyrimidine nucleotide biosynthesis pathway. The sequence is that of Aspartate carbamoyltransferase catalytic subunit from Campylobacter concisus (strain 13826).